We begin with the raw amino-acid sequence, 88 residues long: Small ribosomal subunit protein bS16 (88 aa).

Belongs to the bacterial ribosomal protein bS16 family.

In Mycoplasma pneumoniae (strain ATCC 29342 / M129 / Subtype 1) (Mycoplasmoides pneumoniae), this protein is Small ribosomal subunit protein bS16.